Consider the following 477-residue polypeptide: MSNVTVCVRFRPLSHKERKTNGDKVCFKRLDSESFVFKDEREEDVIFSFDRVFYEDAEQSDVYNFLAVPIVADAISGINGTIITYGQTGAGKTYSMEGPSILHCNKQKTGLVQRVVDELFQSLQSSESMAMWSVKLSMVEIYLEKVRDLLDLSKDNLQIKESKTQGIYISGATEVSIQNSSDALECLSEGIANRAVGETQMNLASSRSHCLYIFSVQQGSTSDERVRGGKIILVDLAGSEKVEKTGAEGRVLDEAKTINKSLSVLGNVVNALTTGKPNHVPYRDSKLTRILQDALGGNSRAALLCCCSPSASNAPESLSTVRFGTRTKLIKTTPKSISPEVDSIKKPIPDSHGQNDLRDRILNKLRLSLKEEDVDLLEELFVQEGIIFDPNYSVADIDSACQDAASQEVSLLTQAVEELKETVEELTDENERLRGELELAQEAAAAAAAARADGALLGFVPAVAISSLLRPFGFVPD.

In terms of domain architecture, Kinesin motor spans asparagine 3 to isoleucine 330. Glycine 86–threonine 93 contacts ATP. Residues glutamine 402–arginine 451 are a coiled coil.

This sequence belongs to the TRAFAC class myosin-kinesin ATPase superfamily. Kinesin family. KIN-1 subfamily. In terms of tissue distribution, widely expressed. Expressed in young roots and leaves, in mature roots, culm, sheath and leaves, and in panicles at various developmental stages. Strongest expression is detected in panicles. In the panicle, expression is detected in anthers, glumme, lemma and palea. In the spikelet, expression is detected in both microsporocyte and the anther walls.

It localises to the cytoplasm. Kinesin-like motor protein that exhibits microtubule-stimulated ATPase activity. Plays an essential role in male meiotic chromosomal dynamics, male gametogenesis and anther dehiscence. May play a minor and nonessential role in regulating meiotic spindle formation. The polypeptide is Kinesin-like protein KIN-1 (Oryza sativa subsp. japonica (Rice)).